We begin with the raw amino-acid sequence, 622 residues long: Low affinity potassium transport system protein Kup (622 aa).

The next 12 membrane-spanning stretches (helical) occupy residues 9–29, 49–69, 103–123, 137–157, 165–185, 213–233, 247–267, 276–296, 337–357, 363–383, 396–416, and 419–439; these read LPAITLAAIGVVYGDIGTSPL, VFGFLSLIFWLLIFVVSIKYL, VIMGLIGGSFFYGEVVITPAI, PQLDTWIVPLSIIVLTLLFMI, VGQLFAPIMLTWFLILAGLGL, VSFIALGAVVLSITGVEALYA, WFTVVLPSLTLNYFGQGALLL, PFFLLAPDWALIPLLIIAALA, IYIPFVNWMLYVAVVIVIVSF, LAAAYGIAVTGTMVLTSILST, FVALILIAFLCVDIPLFTANL, and LLSGGWLPLSLGTVMFIVMTT.

It belongs to the HAK/KUP transporter (TC 2.A.72) family.

It localises to the cell inner membrane. The catalysed reaction is K(+)(in) + H(+)(in) = K(+)(out) + H(+)(out). Responsible for the low-affinity transport of potassium into the cell. Likely operates as a K(+):H(+) symporter. The chain is Low affinity potassium transport system protein Kup from Escherichia coli O6:K15:H31 (strain 536 / UPEC).